A 237-amino-acid polypeptide reads, in one-letter code: uncharacterized protein (237 aa).

A signal peptide spans 1–28; that stretch reads MVFSFSTFNRLVTFTVMAAIVSVRPLTA.

This is an uncharacterized protein from Sinorhizobium fredii (strain NBRC 101917 / NGR234).